The chain runs to 264 residues: Hydroxyethylthiazole kinase (264 aa).

M41 lines the substrate pocket. ATP contacts are provided by K117 and S163. G190 provides a ligand contact to substrate.

It belongs to the Thz kinase family. The cofactor is Mg(2+).

It catalyses the reaction 5-(2-hydroxyethyl)-4-methylthiazole + ATP = 4-methyl-5-(2-phosphooxyethyl)-thiazole + ADP + H(+). It participates in cofactor biosynthesis; thiamine diphosphate biosynthesis; 4-methyl-5-(2-phosphoethyl)-thiazole from 5-(2-hydroxyethyl)-4-methylthiazole: step 1/1. Catalyzes the phosphorylation of the hydroxyl group of 4-methyl-5-beta-hydroxyethylthiazole (THZ). This Thermoanaerobacter pseudethanolicus (strain ATCC 33223 / 39E) (Clostridium thermohydrosulfuricum) protein is Hydroxyethylthiazole kinase.